The sequence spans 220 residues: Probable pterin-4-alpha-carbinolamine dehydratase, chloroplastic (220 aa).

The transit peptide at 1–50 directs the protein to the chloroplast; that stretch reads MAATSSSPPCNISASSLLLRQPSRSILKVFGLLPPVSRNNRKLGRLTVTR.

It belongs to the pterin-4-alpha-carbinolamine dehydratase family. In terms of assembly, interacts with SDIR1. Interacts with AIRP2. Ubiquitinated by SDIR1. Ubiquitination leads to its subsequent degradation, thus controlling abscisic acid (ABA) signaling. Ubiquitinated by AIRP2. Ubiquitination leads to its subsequent degradation, thus controlling abscisic acid (ABA) signaling during drought stress.

It is found in the plastid. The protein localises to the chloroplast. Its subcellular location is the cell membrane. It localises to the nucleus. It catalyses the reaction (4aS,6R)-4a-hydroxy-L-erythro-5,6,7,8-tetrahydrobiopterin = (6R)-L-erythro-6,7-dihydrobiopterin + H2O. Its function is as follows. Involved in tetrahydrobiopterin biosynthesis. Interacts with and acts downstream of the E3 ubiquitin-protein ligase SDIR1 in abscisic acid (ABA) and salt stress signaling. Regulates the expression of the bZIP transcription factor ABI5, which mediates responses to ABA during seed germination and salt stress. The SDIR1-ATP1/SDIRIP1 complex plays an important role in ABA signaling through the ubiquitination pathway. Acts downstream of AIRP2 in regulation of ABA signaling during drought stress. The sequence is that of Probable pterin-4-alpha-carbinolamine dehydratase, chloroplastic from Arabidopsis thaliana (Mouse-ear cress).